The sequence spans 198 residues: dTTP/UTP pyrophosphatase (198 aa).

The Proton acceptor role is filled by aspartate 78.

This sequence belongs to the Maf family. YhdE subfamily. It depends on a divalent metal cation as a cofactor.

It is found in the cytoplasm. It carries out the reaction dTTP + H2O = dTMP + diphosphate + H(+). The catalysed reaction is UTP + H2O = UMP + diphosphate + H(+). Its function is as follows. Nucleoside triphosphate pyrophosphatase that hydrolyzes dTTP and UTP. May have a dual role in cell division arrest and in preventing the incorporation of modified nucleotides into cellular nucleic acids. In Chromobacterium violaceum (strain ATCC 12472 / DSM 30191 / JCM 1249 / CCUG 213 / NBRC 12614 / NCIMB 9131 / NCTC 9757 / MK), this protein is dTTP/UTP pyrophosphatase.